Consider the following 483-residue polypeptide: Phloretin 2'-O-glucosyltransferase (483 aa).

The Proton acceptor role is filled by His-15. An an anthocyanidin-binding site is contributed by His-15. Asp-118 functions as the Charge relay in the catalytic mechanism. UDP-alpha-D-glucose contacts are provided by Thr-140, Ala-360, Gln-362, His-377, Trp-380, Asn-381, Ser-382, and Glu-385. Position 400 (Ala-400) interacts with an anthocyanidin. The UDP-alpha-D-glucose site is built by Glu-401 and Gln-402.

It belongs to the UDP-glycosyltransferase family. In terms of tissue distribution, highly expressed in roots and at lower levels in leaves, flowers and fruits.

It carries out the reaction phloretin + UDP-alpha-D-glucose = phlorizin + UDP + H(+). Functionally, glycosyltransferase that possesses phloretin 2'-O-glycosyltransferase activity. Converts phloretin to phlorizin (phloretin 2'-O-glucoside), a potent antioxidant. Is specific for phloretin and does not possess glycosyltransferase activity toward caffeic acid, catechin, chlorogenic acid, 2-coumaric acid, 3-coumaric acid, 4-coumaric acid, cyanidin, 3,4-dihydroxyhydrocinnamic acid, epicatechin, 3-hydroxybenzoic acid, naringenin, 3,4-dihydroxybenzoic acid, quercetin and rutin. Can glycosylate phloretin in the presence of UDP-glucose, UDP-xylose and UDP-galactose. This Malus domestica (Apple) protein is Phloretin 2'-O-glucosyltransferase.